Consider the following 899-residue polypeptide: ATP-dependent DNA helicase DDX31 (899 aa).

Composition is skewed to basic residues over residues 1-12 (MNKHDQKKKRNK) and 21-31 (KKSKGFIKNKK). Residues 1–142 (MNKHDQKKKR…SKHKRNVPSK (142 aa)) are disordered. Over residues 76-85 (NMNDDDDNNM) the composition is skewed to acidic residues. Residues 86 to 102 (NDDYNNNNIKGDYNNNN) show a composition bias toward low complexity. Over residues 106–121 (DDVDDDDYDDDDDDNF) the composition is skewed to acidic residues. A Q motif motif is present at residues 173–201 (FCDLKYILSESLINTLEKNEFIKMTSIQK). Residues 204–433 (IPLFFKPNDI…NYCLTNNTMW (230 aa)) form the Helicase ATP-binding domain. 217–224 (SMTGSGKT) is an ATP binding site. A DEAD box motif is present at residues 332–335 (DEAD). Residues 463 to 472 (NRENSPLNIH) show a composition bias toward polar residues. The tract at residues 463 to 517 (NRENSPLNIHNNDDNDDNDDNDENNGDNNNNNDDNNNNNDDNNNKNNDDDNNNTY) is disordered. The span at 476 to 487 (DNDDNDDNDENN) shows a compositional bias: acidic residues. Positions 488-503 (GDNNNNNDDNNNNNDD) are enriched in low complexity. In terms of domain architecture, Helicase C-terminal spans 593–782 (KITPVLERED…TIINHFKKFC (190 aa)).

Belongs to the DEAD box helicase family. DDX31/DBP7 subfamily.

It localises to the nucleus. The protein resides in the nucleolus. The enzyme catalyses ATP + H2O = ADP + phosphate + H(+). In terms of biological role, has DNA helicase activity and may also have RNA helicase activity; the DNA helicase direction was not determined. Shows ssDNA and RNA dependent ATPase activity. This is ATP-dependent DNA helicase DDX31 (DDX31) from Plasmodium falciparum (isolate 3D7).